The sequence spans 535 residues: Thermosome subunit gamma (535 aa).

It belongs to the TCP-1 chaperonin family. Forms a Heterooligomeric complex of two stacked eight-membered rings.

In terms of biological role, molecular chaperone; binds unfolded polypeptides in vitro, and has a weak ATPase activity. The chain is Thermosome subunit gamma (thsC) from Saccharolobus solfataricus (strain ATCC 35092 / DSM 1617 / JCM 11322 / P2) (Sulfolobus solfataricus).